The sequence spans 1647 residues: Putative RNA exonuclease pqe-1 (1647 aa).

4 disordered regions span residues 1-199 (MFNG…QVQN), 274-393 (QTPA…TSLP), 515-619 (MMQQ…KPVI), and 641-665 (QVKQEIPEVSSTSDATKSDAAPTAR). 2 stretches are compositionally biased toward low complexity: residues 30–64 (GPSQNAQQQQQQASAPGTSSGGPSQAVSGASSGAS) and 99–131 (TQPQQRQQQQSQPQARQMSTQQAANLRKNAAAA). A compositionally biased stretch (polar residues) spans 143 to 170 (SREQGNAHQPTAGQIPQSSNQPAQQTHN). 2 stretches are compositionally biased toward low complexity: residues 274 to 297 (QTPARGRPANAQLAQNAQQRNPQQ) and 515 to 526 (MMQQQAMQMQMQ). Residues 527–540 (NPPPVHQQPPPQQP) are compositionally biased toward pro residues. Residues 541-555 (PQQQRQKQQRSQPAP) show a composition bias toward low complexity. Positions 592-601 (SKIEPVDVKP) are enriched in basic and acidic residues. The segment covering 650-664 (SSTSDATKSDAAPTA) has biased composition (low complexity). Residues 686–726 (SAKKFERMKAEAEDKEDMKKKIAALQEALFNIQEERRVEKE) are a coiled coil. Positions 736–756 (AVPQNQPASSVQIAQVSTSES) are enriched in polar residues. The tract at residues 736–1174 (AVPQNQPASS…LRNKKHTTEE (439 aa)) is disordered. A compositionally biased stretch (low complexity) spans 761 to 772 (TSEAAATETMTS). Residues 783–793 (TEGEQEEDEDE) are compositionally biased toward acidic residues. Residues 822–833 (RSDEKREKRHVS) show a composition bias toward basic and acidic residues. Positions 878 to 905 (DNEDDDADSFVVGDDEPIEYEEEDEDDM) are enriched in acidic residues. The segment covering 977 to 992 (TPTASSSMSSSTLSYC) has biased composition (low complexity). The segment covering 1018–1031 (KTREENRERKRLAQ) has biased composition (basic and acidic residues). Positions 1038-1054 (SETTGVRRTLRSTQDNS) are enriched in polar residues. Composition is skewed to basic and acidic residues over residues 1076-1088 (AKSSENRAKEKQK) and 1139-1174 (NHTEMLDKRNKESEEKRRKDRDELERLRNKKHTTEE). Residues 1142 to 1187 (EMLDKRNKESEEKRRKDRDELERLRNKKHTTEEEKIKMARLQNALK) adopt a coiled-coil conformation. The Exonuclease domain occupies 1477–1637 (RVYALDCEMV…IFYGLRNPES (161 aa)).

This sequence belongs to the REXO1/REXO3 family. Expressed in the excretory canal, vulval cells, the intestine and in head and tail neurons including ASH, RIC and AIZ neurons.

Its subcellular location is the nucleus. Putative RNA exonuclease which protects neurons from the toxic effects of expanded poly-Q disease proteins. It is unknown whether this is via participation in the pathogenic mechanism underlying poly-Q-induced neurodegeneration or if it is by acting as a genetic modifier of the age of onset or progression of neurodegeneration. Regulates gene expression in neurons. This chain is Putative RNA exonuclease pqe-1, found in Caenorhabditis elegans.